The chain runs to 128 residues: ADA histone acetyltransferase complex component 2 (128 aa).

It localises to the cytoplasm. It is found in the nucleus. The polypeptide is ADA histone acetyltransferase complex component 2 (AHC2) (Saccharomyces cerevisiae (strain ATCC 204508 / S288c) (Baker's yeast)).